A 194-amino-acid chain; its full sequence is Large ribosomal subunit protein bL25B (194 aa).

Belongs to the bacterial ribosomal protein bL25 family. CTC subfamily. As to quaternary structure, part of the 50S ribosomal subunit; part of the 5S rRNA/L5/L18/L25 subcomplex. Contacts the 5S rRNA. Binds to the 5S rRNA independently of L5 and L18.

In terms of biological role, this is one of the proteins that binds to the 5S RNA in the ribosome where it forms part of the central protuberance. The sequence is that of Large ribosomal subunit protein bL25B from Symbiobacterium thermophilum (strain DSM 24528 / JCM 14929 / IAM 14863 / T).